A 547-amino-acid chain; its full sequence is Protein RBL (547 aa).

WD repeat units lie at residues 21–60, 65–104, 214–253, 285–332, and 334–373; these read LEHGVIKCVAFNHRGSLLAAGCADGGCVIWDFETRGIAKE, DCSAAITSVSWSKYGHRLLVSAADKSLTLWDVSTGEKIAR, SGAAPVKNIVFSRNGQYLLTNSHDRTIRIYENLLPAKNVL, EFQD…VKIL, and GPKEALIDLAWHPVHPIIVSVSLAGLVYIWAKDYTENWSA. The interval 466–547 is disordered; the sequence is SPASEEAGQN…GGDDDDDAYY (82 aa). Basic and acidic residues predominate over residues 499-511; it reads SEKAMELQAEKAK. A compositionally biased stretch (acidic residues) spans 530 to 547; it reads QETDDSINGGDDDDDAYY.

As to quaternary structure, part of a complex composed of TRO, RBL and WDR5A. Interacts with TRO and WDR5A, but not with WDR5B. This complex is formed during both vegetative and reproductive development. As to expression, strongly expressed in root tips, shoot apices, vascular tissues, developing embryos and endosperms.

The protein localises to the nucleus. In terms of biological role, promotes the expression of FLC and FLC homologs to repress the floral transition. Promotes WRKY70 and LTP7 genes epigenetic methylation (e.g. H3K4me3) and subsequent expression. This Arabidopsis thaliana (Mouse-ear cress) protein is Protein RBL.